Reading from the N-terminus, the 131-residue chain is Small ribosomal subunit protein uS8 (131 aa).

The protein belongs to the universal ribosomal protein uS8 family. As to quaternary structure, part of the 30S ribosomal subunit. Contacts proteins S5 and S12.

One of the primary rRNA binding proteins, it binds directly to 16S rRNA central domain where it helps coordinate assembly of the platform of the 30S subunit. The protein is Small ribosomal subunit protein uS8 of Azobacteroides pseudotrichonymphae genomovar. CFP2.